A 242-amino-acid polypeptide reads, in one-letter code: ATP synthase subunit a (242 aa).

Helical transmembrane passes span 29 to 49 (SSIY…LAFY), 84 to 104 (FIPL…LGMT), 114 to 134 (IIVT…VGFV), 140 to 160 (FLTL…MIVI), 181 to 201 (MAGH…MIYL), and 203 to 223 (FLPI…AILQ).

It belongs to the ATPase A chain family. As to quaternary structure, F-type ATPases have 2 components, CF(1) - the catalytic core - and CF(0) - the membrane proton channel. CF(1) has five subunits: alpha(3), beta(3), gamma(1), delta(1), epsilon(1). CF(0) has three main subunits: a(1), b(2) and c(9-12). The alpha and beta chains form an alternating ring which encloses part of the gamma chain. CF(1) is attached to CF(0) by a central stalk formed by the gamma and epsilon chains, while a peripheral stalk is formed by the delta and b chains.

It localises to the cell inner membrane. Functionally, key component of the proton channel; it plays a direct role in the translocation of protons across the membrane. The polypeptide is ATP synthase subunit a (Rickettsia conorii (strain ATCC VR-613 / Malish 7)).